We begin with the raw amino-acid sequence, 503 residues long: MSQLKLEEISSVIEEKIKNFELDCDMAEVGKVVSYADGVAKVYGLNGVMSYEVLEFETGDKGVAANLEEDSVGVIVFGFGNNIKEGTSVKRTKNLMKVPVGDAVVGRVLNALGEPIDGKGEIETNEFSLIEQKAPGIMDRKSVHEPLQTGIKAIDALVPIGRGQRELIIGDKQTGKTTVAIDAIINQKGQNVICIYVAIGQKESTVAQVVRKLEEYGAMEYSVVINASASDSAAMQYLAPYSGVAMGEYFRDHARHALIVYDDLSKHAVAYREISLILRRPPGREAFPGDVFYIHSRLLERAAKLCDEKGAGSLTALPIVETQAGDVSAYIPTNIISITDGQIFLETDLFYSGIRPAINVGLSVSRVGGAAQIKATKQVSGTLRLDLAQYRELQAFTQFASDLDEASKKQLERGQRMVEVLKQAPYSPLPIEKQVVIIYAGAKGFLDSVSVKKVVDFEEQLHPFLEAKYPQVLEEIHTKKALDKDLEAMLRKVLEEFKLTYSE.

An ATP-binding site is contributed by 170–177 (GDKQTGKT).

It belongs to the ATPase alpha/beta chains family. As to quaternary structure, F-type ATPases have 2 components, CF(1) - the catalytic core - and CF(0) - the membrane proton channel. CF(1) has five subunits: alpha(3), beta(3), gamma(1), delta(1), epsilon(1). CF(0) has three main subunits: a(1), b(2) and c(9-12). The alpha and beta chains form an alternating ring which encloses part of the gamma chain. CF(1) is attached to CF(0) by a central stalk formed by the gamma and epsilon chains, while a peripheral stalk is formed by the delta and b chains.

It is found in the cell inner membrane. It catalyses the reaction ATP + H2O + 4 H(+)(in) = ADP + phosphate + 5 H(+)(out). Produces ATP from ADP in the presence of a proton gradient across the membrane. The alpha chain is a regulatory subunit. This chain is ATP synthase subunit alpha, found in Helicobacter pylori (strain HPAG1).